A 66-amino-acid polypeptide reads, in one-letter code: Large ribosomal subunit protein bL33c (66 aa).

Belongs to the bacterial ribosomal protein bL33 family.

The protein localises to the plastid. It is found in the chloroplast. The protein is Large ribosomal subunit protein bL33c of Oenothera argillicola (Appalachian evening primrose).